A 321-amino-acid polypeptide reads, in one-letter code: F-box protein At4g35930 (321 aa).

The segment covering 1 to 13 (MGKVSPKDLDSKT) has biased composition (basic and acidic residues). The tract at residues 1–23 (MGKVSPKDLDSKTSVRKKKLKSS) is disordered. The 49-residue stretch at 159-207 (ESQLESLPMDLLVKIVCHLHHDQLKAVFHVSQRIRMATILARQYHFNYT) folds into the F-box domain. Residues 228–258 (WPFRRGDGNPTMVSSPHTPKAPKHAPRPPSR) form a disordered region.

This Arabidopsis thaliana (Mouse-ear cress) protein is F-box protein At4g35930.